We begin with the raw amino-acid sequence, 498 residues long: Succinate-semialdehyde dehydrogenase [NADP(+)] 1 (498 aa).

247 to 252 (GSTNVG) provides a ligand contact to NAD(+). Residues E269 and C303 contribute to the active site.

The protein belongs to the aldehyde dehydrogenase family. In terms of assembly, homotetramer.

The protein resides in the cytoplasm. The catalysed reaction is succinate semialdehyde + NAD(+) + H2O = succinate + NADH + 2 H(+). It carries out the reaction succinate semialdehyde + NADP(+) + H2O = succinate + NADPH + 2 H(+). It participates in amino-acid degradation; 4-aminobutanoate degradation. Functionally, catalyzes the oxidation of succinate semialdehyde to succinate. Can utilize both NAD(+) or NADP(+) as a coenzyme. Functions in a gamma-aminobutyrate (GABA) degradation pathway that allows growth utilizing GABA as a nitrogen source. Functions in the GABA shunt, which allows to bypass 2 reactions in the TCA cycle by removing alpha-ketoglutarate from the cycle and feeding succinate and NADH back into the cycle. This chain is Succinate-semialdehyde dehydrogenase [NADP(+)] 1 (ssd1), found in Schizosaccharomyces pombe (strain 972 / ATCC 24843) (Fission yeast).